The sequence spans 43 residues: MDSREQIDWTCNECNFSWIGDNSDFSCPSCDEIDIKPKNKILD.

This Bacillus subtilis (strain 168) protein is SPbeta prophage-derived uncharacterized protein YotD (yotD).